The following is a 401-amino-acid chain: L-methionine gamma-lyase (401 aa).

Pyridoxal 5'-phosphate is bound by residues 59–61 and 89–90; these read YTR and GI. Tyrosine 114 contributes to the substrate binding site. 210 to 212 is a binding site for pyridoxal 5'-phosphate; the sequence is SAT. Position 213 is an N6-(pyridoxal phosphate)lysine (lysine 213). Substrate is bound at residue arginine 377.

Belongs to the trans-sulfuration enzymes family. L-methionine gamma-lyase subfamily. Homotetramer; dimer of active dimers. Pyridoxal 5'-phosphate serves as cofactor.

The catalysed reaction is L-methionine + H2O = methanethiol + 2-oxobutanoate + NH4(+). It carries out the reaction L-homocysteine + H2O = 2-oxobutanoate + hydrogen sulfide + NH4(+) + H(+). Catalyzes the alpha,gamma-elimination of L-methionine to produce methanethiol, 2-oxobutanoate and ammonia; methanethiol (methyl mercaptan) is considered to be one of the main causes of the oral malodor associated with periodontitis and may also play a role in the pathogenicity of T.denticola. Also displays homocysteine desulfhydrase activity, degrading homocysteine to produce hydrogen sulfide, 2-oxobutanoate and ammonia. The sequence is that of L-methionine gamma-lyase from Treponema denticola (strain ATCC 35405 / DSM 14222 / CIP 103919 / JCM 8153 / KCTC 15104).